A 187-amino-acid chain; its full sequence is Ion-translocating oxidoreductase complex subunit B (187 aa).

The segment at 1–26 (MTHILFAVLVLALLALAFGIILGFAA) is hydrophobic. In terms of domain architecture, 4Fe-4S spans 32-90 (EADPIVDQLDALLPQTQCGQCGYPGCKPYAEALANGDQINKCVPGGDATMRKIADLMGV). Positions 49, 52, 57, 73, 115, 118, 121, 125, 145, 148, 151, and 155 each coordinate [4Fe-4S] cluster. 4Fe-4S ferredoxin-type domains lie at 106 to 135 (KVAFIHEDQCIGCTKCIQACPVDAIVGATK) and 136 to 165 (AMHTVITDECTGCDLCVDPCPTDCIEMIPV).

This sequence belongs to the 4Fe4S bacterial-type ferredoxin family. RnfB subfamily. As to quaternary structure, the complex is composed of six subunits: RnfA, RnfB, RnfC, RnfD, RnfE and RnfG. The cofactor is [4Fe-4S] cluster.

The protein resides in the cell inner membrane. Part of a membrane-bound complex that couples electron transfer with translocation of ions across the membrane. This Aeromonas salmonicida (strain A449) protein is Ion-translocating oxidoreductase complex subunit B.